A 336-amino-acid chain; its full sequence is Cinnamoyl-CoA reductase 2 (336 aa).

Residues 21-27 (GAGGFIA), arginine 46, lysine 52, 72-73 (DL), 92-94 (TAS), tyrosine 165, lysine 169, 192-195 (PVVV), and serine 207 contribute to the NADP(+) site. Cysteine 158 and cysteine 166 form a disulfide bridge. The active-site Proton donor is the lysine 169.

The protein belongs to the NAD(P)-dependent epimerase/dehydratase family. Dihydroflavonol-4-reductase subfamily. In terms of processing, the formation of a reversible disulfide bond reduces activity by perturbing the positioning of nearby catalytic residues. As to expression, mainly expressed in roots and stems, especially at the second internode and, to a lower extent, in leaves and flowers. Localized in vascular elements, with weaker expression in the interfascicular (xylem fiber) region.

Its subcellular location is the cytoplasm. It catalyses the reaction (E)-coniferaldehyde + NADP(+) + CoA = (E)-feruloyl-CoA + NADPH + H(+). The enzyme catalyses (E)-4-coumaraldehyde + NADP(+) + CoA = (E)-4-coumaroyl-CoA + NADPH + H(+). The catalysed reaction is (E)-sinapaldehyde + NADP(+) + CoA = (E)-sinapoyl-CoA + NADPH + H(+). It carries out the reaction (E)-cinnamaldehyde + NADP(+) + CoA = (E)-cinnamoyl-CoA + NADPH + H(+). It catalyses the reaction (E)-caffeyl aldehyde + NADP(+) + CoA = (E)-caffeoyl-CoA + NADPH + H(+). It functions in the pathway aromatic compound metabolism; phenylpropanoid biosynthesis. Its function is as follows. Involved in the latter stages of lignin biosynthesis. Catalyzes one of the last steps of monolignol biosynthesis, the conversion of cinnamoyl-CoAs into their corresponding cinnamaldehydes. Mediates the conversion of caffeoyl-CoA and coumaroyl-CoA to caffaldehyde and coumaraldehyde, respectively. Also active, with a lower efficiency, toward feruloyl-CoA and sinapoyl-CoA. Involved in the production of floral volatile phenylpropanoids in flowers of fragrant cultivars from cinnamic acid, a common precursor with the anthocyanin biosynthesis pathway involved in flower pigmentation. The chain is Cinnamoyl-CoA reductase 2 from Medicago truncatula (Barrel medic).